Here is a 38-residue protein sequence, read N- to C-terminus: Phospholipase A2 1 (38 aa).

Tyr-28, Gly-30, and Gly-32 together coordinate Ca(2+).

The protein belongs to the phospholipase A2 family. Group I subfamily. Requires Ca(2+) as cofactor. Expressed by the venom gland.

The protein resides in the secreted. It carries out the reaction a 1,2-diacyl-sn-glycero-3-phosphocholine + H2O = a 1-acyl-sn-glycero-3-phosphocholine + a fatty acid + H(+). Functionally, snake venom phospholipase A2 (PLA2) that inhibits neuromuscular transmission by blocking acetylcholine release from the nerve termini. PLA2 catalyzes the calcium-dependent hydrolysis of the 2-acyl groups in 3-sn-phosphoglycerides. The polypeptide is Phospholipase A2 1 (Calliophis bivirgatus (Blue Malaysian coral snake)).